The chain runs to 323 residues: Acetyl esterase (323 aa).

The short motif at 91 to 93 is the Involved in the stabilization of the negatively charged intermediate by the formation of the oxyanion hole element; sequence HGG. Active-site residues include serine 165, aspartate 262, and histidine 292.

Belongs to the 'GDXG' lipolytic enzyme family. In terms of assembly, homodimer. Interacts with MalT and MelA.

It localises to the cytoplasm. Displays esterase activity towards short chain fatty esters (acyl chain length of up to 8 carbons). Able to hydrolyze triacetylglycerol (triacetin) and tributyrylglycerol (tributyrin), but not trioleylglycerol (triolein) or cholesterol oleate. Negatively regulates MalT activity by antagonizing maltotriose binding. Inhibits MelA galactosidase activity. The polypeptide is Acetyl esterase (Salmonella choleraesuis (strain SC-B67)).